The chain runs to 194 residues: Peptidyl-tRNA hydrolase (194 aa).

TRNA is bound at residue tyrosine 17. Catalysis depends on histidine 22, which acts as the Proton acceptor. Residues tyrosine 68, asparagine 70, and asparagine 116 each coordinate tRNA.

It belongs to the PTH family. In terms of assembly, monomer.

The protein resides in the cytoplasm. It catalyses the reaction an N-acyl-L-alpha-aminoacyl-tRNA + H2O = an N-acyl-L-amino acid + a tRNA + H(+). Hydrolyzes ribosome-free peptidyl-tRNAs (with 1 or more amino acids incorporated), which drop off the ribosome during protein synthesis, or as a result of ribosome stalling. Its function is as follows. Catalyzes the release of premature peptidyl moieties from peptidyl-tRNA molecules trapped in stalled 50S ribosomal subunits, and thus maintains levels of free tRNAs and 50S ribosomes. The chain is Peptidyl-tRNA hydrolase from Chromohalobacter salexigens (strain ATCC BAA-138 / DSM 3043 / CIP 106854 / NCIMB 13768 / 1H11).